The chain runs to 220 residues: Putative cobalt transport protein CbiM (220 aa).

5 consecutive transmembrane segments (helical) span residues 6 to 26 (GFLPPRWAAAWTLAAAPIVVY), 43 to 63 (ALVAIGIAFVFILSALKFPSV), 74 to 94 (GLLVVLFGPAVTAFTATIVLL), 98 to 118 (LLLAHGGITTLGANVVAMGII), and 182 to 202 (IFTLTQVPIGILEGILAAAVI).

Belongs to the CbiM family. In terms of assembly, forms an energy-coupling factor (ECF) transporter complex composed of an ATP-binding protein (A component, CbiO), a transmembrane protein (T component, CbiQ) and 2 possible substrate-capture proteins (S components, CbiM and CbiN) of unknown stoichimetry.

The protein localises to the cell membrane. The protein operates within cofactor biosynthesis; adenosylcobalamin biosynthesis. Its function is as follows. Part of the energy-coupling factor (ECF) transporter complex CbiMNOQ involved in cobalt import. The protein is Putative cobalt transport protein CbiM of Haloquadratum walsbyi (strain DSM 16790 / HBSQ001).